A 715-amino-acid chain; its full sequence is Formate dehydrogenase H (715 aa).

The 4Fe-4S Mo/W bis-MGD-type domain occupies 1-56; the sequence is MKKVVTVCPYCASGCKINLVVDNGKIVRAEAAQGKTNQGTLCLKGYYGWDFINDTQ. Positions 8, 11, 15, and 42 each coordinate [4Fe-4S] cluster. Lys-44 functions as the Electron donor/acceptor in the catalytic mechanism. Residues Arg-110, Sec-140, Asn-176, Asp-179, Ser-180, Cys-201, Asp-202, Arg-204, Gly-221, Asn-223, Met-297, Gln-335, Asp-404, Thr-408, Gln-428, Asp-429, Ser-445, Asp-478, Arg-581, Glu-582, His-585, Ser-587, Tyr-678, and Lys-679 each coordinate Mo-bis(molybdopterin guanine dinucleotide). The Proton donor/acceptor role is filled by Sec-140. A non-standard amino acid (selenocysteine) is located at residue Sec-140.

Belongs to the prokaryotic molybdopterin-containing oxidoreductase family. Consists of two separable enzymatic activities: a formate dehydrogenase component (FDH-H) and hydrogenase-3. Requires [4Fe-4S] cluster as cofactor. Mo-bis(molybdopterin guanine dinucleotide) serves as cofactor.

The enzyme catalyses formate + A + H(+) = AH2 + CO2. Inhibited by aerobic conditions. Its function is as follows. Decomposes formic acid to hydrogen and carbon dioxide under anaerobic conditions in the absence of exogenous electron acceptors. This Escherichia coli (strain K12) protein is Formate dehydrogenase H (fdhF).